Consider the following 620-residue polypeptide: DNA primase (620 aa).

A CHC2-type zinc finger spans residues cysteine 38–cysteine 62. Residues leucine 266–alanine 350 enclose the Toprim domain. The Mg(2+) site is built by glutamate 272, aspartate 319, and aspartate 321.

The protein belongs to the DnaG primase family. Monomer. Interacts with DnaB. Zn(2+) is required as a cofactor. The cofactor is Mg(2+).

The enzyme catalyses ssDNA + n NTP = ssDNA/pppN(pN)n-1 hybrid + (n-1) diphosphate.. RNA polymerase that catalyzes the synthesis of short RNA molecules used as primers for DNA polymerase during DNA replication. The sequence is that of DNA primase from Mycoplasma pneumoniae (strain ATCC 29342 / M129 / Subtype 1) (Mycoplasmoides pneumoniae).